The primary structure comprises 747 residues: AT-rich interactive domain-containing protein 4 (747 aa).

The segment at 454–475 (PLPTRKRSEPCRESKEIENGGP) is disordered. The segment covering 459 to 471 (KRSEPCRESKEIE) has biased composition (basic and acidic residues). The region spanning 566 to 670 (VCSEEEFLRD…YLLEYEYAHD (105 aa)) is the ARID domain. A PHD-type zinc finger spans residues 674-730 (GECCLICRSSTAGDWVNCGSCGEWAHFGCDRRPGLGAFKDYAKTDGLEYVCPNCSVS).

The protein localises to the nucleus. This chain is AT-rich interactive domain-containing protein 4 (ARID4), found in Arabidopsis thaliana (Mouse-ear cress).